The chain runs to 468 residues: Glutamate--tRNA ligase (468 aa).

The short motif at 8–18 (PSPTGFLHVGG) is the 'HIGH' region element. The Zn(2+) site is built by Cys-97, Cys-99, Cys-124, and Asp-126. The 'KMSKS' region signature appears at 236–240 (KLSKR). Lys-239 serves as a coordination point for ATP.

The protein belongs to the class-I aminoacyl-tRNA synthetase family. Glutamate--tRNA ligase type 1 subfamily. In terms of assembly, monomer. Zn(2+) is required as a cofactor.

Its subcellular location is the cytoplasm. The enzyme catalyses tRNA(Glu) + L-glutamate + ATP = L-glutamyl-tRNA(Glu) + AMP + diphosphate. In terms of biological role, catalyzes the attachment of glutamate to tRNA(Glu) in a two-step reaction: glutamate is first activated by ATP to form Glu-AMP and then transferred to the acceptor end of tRNA(Glu). The polypeptide is Glutamate--tRNA ligase (Francisella tularensis subsp. mediasiatica (strain FSC147)).